Consider the following 2382-residue polypeptide: Highly reducing polyketide synthase srdA (2382 aa).

The segment at 1 to 25 (MAPHSTLDSDYSSGSSTPTSASAAG) is disordered. The Ketosynthase family 3 (KS3) domain maps to 44 to 474 (QEPIAIIGMG…GANAHAILEA (431 aa)). Active-site for beta-ketoacyl synthase activity residues include Cys-217, His-352, and His-390. The tract at residues 580–891 (VFTGQGAQWP…HYGSALSRGK (312 aa)) is malonyl-CoA:ACP transacylase (MAT) domain. The active-site For malonyltransferase activity is the Ser-672. Residues 971-1108 (HDLLGSQVHG…GLVKIDSAPA (138 aa)) form an N-terminal hotdog fold region. The dehydratase (DH) domain stretch occupies residues 971-1274 (HDLLGSQVHG…RQVSYQSGIQ (304 aa)). Positions 971–1275 (HDLLGSQVHG…QVSYQSGIQQ (305 aa)) constitute a PKS/mFAS DH domain. Residue His-1003 is the Proton acceptor; for dehydratase activity of the active site. A C-terminal hotdog fold region spans residues 1121–1275 (MEPQAPRTWY…QVSYQSGIQQ (155 aa)). Catalysis depends on Asp-1189, which acts as the Proton donor; for dehydratase activity. An enoyl reductase (ER) domain region spans residues 1668–1979 (GQIDSIFFRR…AKGHSGSVVV (312 aa)). The segment at 2004–2180 (SYLLVGCLGG…ATSIGLGMIS (177 aa)) is ketoreductase (KR) domain. In terms of domain architecture, Carrier spans 2298–2376 (SVEDAVLKMI…LLSELITKKM (79 aa)). Ser-2335 is modified (O-(pantetheine 4'-phosphoryl)serine).

In terms of biological role, highly reducing polyketide synthase; part of the gene cluster that mediates the biosynthesis of sordarial, a salicylic aldehyde structurally related to the phytotoxin pyriculol. The most interesting aspect of this pathway is formation of an aromatic product from the highly reducing polyketide synthase srdA. SrdA synthesizes a reduced polyketide chain from one molecule of acetyl-CoA and five molecules of malonyl-CoA. The polyketide chain is then reductively released as an aldehyde. The oxidoreductases srdC, srdD and srdE then oxidize one of the hydroxy groups to facilitate the intramolecular aldol condensation, followed by dehydration to yield a salicylic aldehyde. This aldehyde can undergo facile reduction by endogenous reductases to yield the alcohol 1-hydroxy-2-hydroxymethyl-3-pent-1,3-dienylbenzene. The flavin-dependent srdI counteract against the propensity of the aldehydes to be reduced under physiological conditions and is responsible for reoxidizing 1-hydroxy-2-hydroxymethyl-3-pent-1,3-dienylbenzene back to the salicylic aldehyde. This salicylic aldehyde is then selectively epoxidized by the cupin-domain-containing oxidoreductase srdB to yield the epoxide, which can be hydrolyzed stereoselectively by the hydrolase srdG to give the final product sordarial. The sequence is that of Highly reducing polyketide synthase srdA from Neurospora crassa (strain ATCC 24698 / 74-OR23-1A / CBS 708.71 / DSM 1257 / FGSC 987).